Reading from the N-terminus, the 111-residue chain is Cytochrome c2 (111 aa).

Heme c is bound by residues Cys-14, Cys-17, His-18, and Met-83.

The protein belongs to the cytochrome c family. Post-translationally, binds 1 heme c group covalently per subunit.

Its function is as follows. Cytochrome c2 is found mainly in purple, non-sulfur, photosynthetic bacteria where it functions as the electron donor to the oxidized bacteriochlorophyll in the photophosphorylation pathway. However, it may also have a role in the respiratory chain and is found in some non-photosynthetic bacteria. The protein is Cytochrome c2 of Agrobacterium tumefaciens (strain II Chrys).